The chain runs to 761 residues: Zinc finger protein 711 (761 aa).

Residues Lys224, Lys235, and Lys296 each participate in a glycyl lysine isopeptide (Lys-Gly) (interchain with G-Cter in SUMO2) cross-link. 5 C2H2-type zinc fingers span residues 383–408 (YPCH…HPDH), 414–436 (YQCT…LESH), 476–499 (HKCK…LAVH), 505–527 (HVCV…MRTH), and 533–556 (YQCQ…KSKH). Residues 562–584 (YKCEHCPQAFGDERELQRHLDLF) form a C2H2-type 6; atypical zinc finger. Residues Cys564, Cys567, and His580 each contribute to the Zn(2+) site. 6 C2H2-type zinc fingers span residues 590 to 613 (HQCP…ISVH), 619 to 641 (HKCE…SDIH), 647 to 670 (HQCR…LSVH), 676 to 698 (LKCK…MKTH), 704 to 727 (YQCE…ISIH), and 733 to 755 (HRCE…IMRH).

The protein belongs to the krueppel C2H2-type zinc-finger protein family. As to quaternary structure, interacts with PHF8.

It is found in the nucleus. In terms of biological role, transcription regulator required for brain development. Probably acts as a transcription factor that binds to the promoter of target genes and recruits PHF8 histone demethylase, leading to activated expression of genes involved in neuron development, such as KDM5C. May compete with transcription factor ARX for activation of expression of KDM5C. The protein is Zinc finger protein 711 (Znf711) of Mus musculus (Mouse).